Here is a 501-residue protein sequence, read N- to C-terminus: Ribose import ATP-binding protein RbsA (501 aa).

2 consecutive ABC transporter domains span residues 8–245 (LKMV…VGRT) and 255–500 (VKKG…VGIN). ATP is bound at residue 40-47 (GENGAGKS).

Belongs to the ABC transporter superfamily. Ribose importer (TC 3.A.1.2.1) family. As to quaternary structure, the complex is composed of an ATP-binding protein (RbsA), two transmembrane proteins (RbsC) and a solute-binding protein (RbsB).

Its subcellular location is the cell membrane. The catalysed reaction is D-ribose(out) + ATP + H2O = D-ribose(in) + ADP + phosphate + H(+). Part of the ABC transporter complex RbsABC involved in ribose import. Responsible for energy coupling to the transport system. The polypeptide is Ribose import ATP-binding protein RbsA (Clostridium perfringens (strain SM101 / Type A)).